The following is a 101-amino-acid chain: MGTRLLPALFLVLLVLGFEVQGTQQPQQDEMPSPTFLTQVKESLSSYWESAKTAAQNLYEKTYLPAVDEKLRDLYSKSTAAMSTYTGIFTDQVLSVLKGEE.

A signal peptide spans 1 to 22 (MGTRLLPALFLVLLVLGFEVQG). An O-glycosylated at one site region spans residues 23 to 38 (TQQPQQDEMPSPTFLT). Residues 66–74 (AVDEKLRDL) are lipid binding. Positions 78 to 101 (STAAMSTYTGIFTDQVLSVLKGEE) are lipoprotein lipase cofactor.

This sequence belongs to the apolipoprotein C2 family. Post-translationally, proapolipoprotein C-II is synthesized as a sialic acid containing glycoprotein which is subsequently desialylated prior to its proteolytic processing. In terms of processing, proapolipoprotein C-II, the major form found in plasma undergoes proteolytic cleavage of its N-terminal hexapeptide to generate apolipoprotein C-II, which occurs as the minor form in plasma. In terms of tissue distribution, liver and intestine.

The protein localises to the secreted. Its function is as follows. Component of chylomicrons, very low-density lipoproteins (VLDL), low-density lipoproteins (LDL), and high-density lipoproteins (HDL) in plasma. Plays an important role in lipoprotein metabolism as an activator of lipoprotein lipase. Both proapolipoprotein C-II and apolipoprotein C-II can activate lipoprotein lipase. In normolipidemic individuals, it is mainly distributed in the HDL, whereas in hypertriglyceridemic individuals, predominantly found in the VLDL and LDL. This Homo sapiens (Human) protein is Apolipoprotein C-II (APOC2).